The following is a 255-amino-acid chain: Protein patched homolog 2 (255 aa).

At 1–197 (SLLQGGSAYL…LNDIMKSFSD (197 aa)) the chain is on the extracellular side. Asparagine 147 and asparagine 175 each carry an N-linked (GlcNAc...) asparagine glycan. A helical transmembrane segment spans residues 198-218 (VSVIRVAGGYLLMLAYACVTM). Residues 199–255 (SVIRVAGGYLLMLAYACVTMLRWDCTKSQGAVGLAGVLLVALSVASGLGLCSLLGIS) form the SSD domain. Residues 219-227 (LRWDCTKSQ) lie on the Cytoplasmic side of the membrane. The chain crosses the membrane as a helical span at residues 228–248 (GAVGLAGVLLVALSVASGLGL). At 249–255 (CSLLGIS) the chain is on the extracellular side.

Belongs to the patched family. As to expression, in the eye, detected in neural retina, iris, retinal pigment epithelium, but not in lens.

It is found in the membrane. In terms of biological role, may act as a receptor for sonic hedgehog (SHH). This chain is Protein patched homolog 2 (PTC2), found in Cynops pyrrhogaster (Japanese fire-bellied newt).